The chain runs to 354 residues: NADH-quinone oxidoreductase subunit H (354 aa).

8 helical membrane-spanning segments follow: residues Leu-25–Trp-45, Trp-91–Ile-111, Leu-126–Ala-146, Met-170–Val-190, Phe-205–Ile-225, Ile-267–Phe-287, Phe-290–Trp-310, and Ile-330–Leu-350.

This sequence belongs to the complex I subunit 1 family. NDH-1 is composed of 14 different subunits. Subunits NuoA, H, J, K, L, M, N constitute the membrane sector of the complex.

It localises to the cell inner membrane. The catalysed reaction is a quinone + NADH + 5 H(+)(in) = a quinol + NAD(+) + 4 H(+)(out). Functionally, NDH-1 shuttles electrons from NADH, via FMN and iron-sulfur (Fe-S) centers, to quinones in the respiratory chain. The immediate electron acceptor for the enzyme in this species is believed to be ubiquinone. Couples the redox reaction to proton translocation (for every two electrons transferred, four hydrogen ions are translocated across the cytoplasmic membrane), and thus conserves the redox energy in a proton gradient. This subunit may bind ubiquinone. The sequence is that of NADH-quinone oxidoreductase subunit H from Paraburkholderia xenovorans (strain LB400).